The following is a 577-amino-acid chain: CDPK-related kinase 7 (577 aa).

The interval Met1–Phe38 is disordered. Gly2 is lipidated: N-myristoyl glycine. The Protein kinase domain occupies Tyr124–Leu386. ATP-binding positions include Val130–Thr138 and Lys156. Asp252 serves as the catalytic Proton acceptor. Ser292 bears the Phosphoserine mark. Ser334 is modified (phosphoserine; by CPK1, CPK10 and CPK34). An autoinhibitory domain region spans residues Glu391–Leu421. Positions Ser410 to Leu430 are calmodulin binding (CaMBD). EF-hand domains follow at residues Pro428–Ala464, Thr465–Leu500, Glu501–Val540, and His543–Arg572. Ca(2+)-binding residues include Ser443, Asn445, Tyr447, Lys484, Glu489, Asp520, Asn522, Glu529, Asp554, and Lys556. Ser558 carries the post-translational modification Phosphoserine.

The protein belongs to the protein kinase superfamily. Ser/Thr protein kinase family. CDPK subfamily. Binds calmodulin (CaM) in a calcium-dependent manner. In terms of processing, autophosphorylated.

The protein localises to the membrane. The catalysed reaction is L-seryl-[protein] + ATP = O-phospho-L-seryl-[protein] + ADP + H(+). It carries out the reaction L-threonyl-[protein] + ATP = O-phospho-L-threonyl-[protein] + ADP + H(+). Activated by calcium and calmodulin. Autophosphorylation may play an important role in the regulation of the kinase activity. Functionally, may play a role in signal transduction pathways that involve calcium as a second messenger. In Arabidopsis thaliana (Mouse-ear cress), this protein is CDPK-related kinase 7 (CRK7).